A 204-amino-acid chain; its full sequence is ATP-dependent Clp protease proteolytic subunit (204 aa).

The active-site Nucleophile is Ser-100. His-125 is an active-site residue.

Belongs to the peptidase S14 family. Fourteen ClpP subunits assemble into 2 heptameric rings which stack back to back to give a disk-like structure with a central cavity, resembling the structure of eukaryotic proteasomes.

Its subcellular location is the cytoplasm. The catalysed reaction is Hydrolysis of proteins to small peptides in the presence of ATP and magnesium. alpha-casein is the usual test substrate. In the absence of ATP, only oligopeptides shorter than five residues are hydrolyzed (such as succinyl-Leu-Tyr-|-NHMec, and Leu-Tyr-Leu-|-Tyr-Trp, in which cleavage of the -Tyr-|-Leu- and -Tyr-|-Trp bonds also occurs).. Functionally, cleaves peptides in various proteins in a process that requires ATP hydrolysis. Has a chymotrypsin-like activity. Plays a major role in the degradation of misfolded proteins. The polypeptide is ATP-dependent Clp protease proteolytic subunit (Anaeromyxobacter sp. (strain Fw109-5)).